Reading from the N-terminus, the 122-residue chain is Large ribosomal subunit protein uL14 (122 aa).

It belongs to the universal ribosomal protein uL14 family. As to quaternary structure, part of the 50S ribosomal subunit. Forms a cluster with proteins L3 and L19. In the 70S ribosome, L14 and L19 interact and together make contacts with the 16S rRNA in bridges B5 and B8.

In terms of biological role, binds to 23S rRNA. Forms part of two intersubunit bridges in the 70S ribosome. The sequence is that of Large ribosomal subunit protein uL14 from Thermobifida fusca (strain YX).